Here is a 385-residue protein sequence, read N- to C-terminus: Probable endopeptidase MT2245 (385 aa).

The span at 235–257 shows a compositional bias: pro residues; that stretch reads AALPPGAPPGDGPAPGVAPPPGG. The disordered stretch occupies residues 235 to 268; the sequence is AALPPGAPPGDGPAPGVAPPPGGMPGLPFVQPDG. Residues 270-385 form the NlpC/P60 domain; sequence GGDRTAVVQA…SGPIYDARRY (116 aa). The Nucleophile role is filled by Cys-300. The active-site Proton acceptor is His-348. The active site involves His-360.

The protein belongs to the peptidase C40 family.

The polypeptide is Probable endopeptidase MT2245 (Mycobacterium tuberculosis (strain CDC 1551 / Oshkosh)).